The sequence spans 306 residues: 4-hydroxy-3-methylbut-2-enyl diphosphate reductase (306 aa).

Residue Cys12 participates in [4Fe-4S] cluster binding. The (2E)-4-hydroxy-3-methylbut-2-enyl diphosphate site is built by His41 and His74. The dimethylallyl diphosphate site is built by His41 and His74. Isopentenyl diphosphate is bound by residues His41 and His74. Cys96 contacts [4Fe-4S] cluster. Residue His124 participates in (2E)-4-hydroxy-3-methylbut-2-enyl diphosphate binding. His124 is a binding site for dimethylallyl diphosphate. His124 is an isopentenyl diphosphate binding site. Catalysis depends on Glu126, which acts as the Proton donor. Thr164 contacts (2E)-4-hydroxy-3-methylbut-2-enyl diphosphate. Cys194 serves as a coordination point for [4Fe-4S] cluster. The (2E)-4-hydroxy-3-methylbut-2-enyl diphosphate site is built by Ser222, Ser223, Asn224, and Ser266. Residues Ser222, Ser223, Asn224, and Ser266 each coordinate dimethylallyl diphosphate. Isopentenyl diphosphate contacts are provided by Ser222, Ser223, Asn224, and Ser266.

It belongs to the IspH family. Requires [4Fe-4S] cluster as cofactor.

The enzyme catalyses isopentenyl diphosphate + 2 oxidized [2Fe-2S]-[ferredoxin] + H2O = (2E)-4-hydroxy-3-methylbut-2-enyl diphosphate + 2 reduced [2Fe-2S]-[ferredoxin] + 2 H(+). It carries out the reaction dimethylallyl diphosphate + 2 oxidized [2Fe-2S]-[ferredoxin] + H2O = (2E)-4-hydroxy-3-methylbut-2-enyl diphosphate + 2 reduced [2Fe-2S]-[ferredoxin] + 2 H(+). It functions in the pathway isoprenoid biosynthesis; dimethylallyl diphosphate biosynthesis; dimethylallyl diphosphate from (2E)-4-hydroxy-3-methylbutenyl diphosphate: step 1/1. It participates in isoprenoid biosynthesis; isopentenyl diphosphate biosynthesis via DXP pathway; isopentenyl diphosphate from 1-deoxy-D-xylulose 5-phosphate: step 6/6. In terms of biological role, catalyzes the conversion of 1-hydroxy-2-methyl-2-(E)-butenyl 4-diphosphate (HMBPP) into a mixture of isopentenyl diphosphate (IPP) and dimethylallyl diphosphate (DMAPP). Acts in the terminal step of the DOXP/MEP pathway for isoprenoid precursor biosynthesis. The chain is 4-hydroxy-3-methylbut-2-enyl diphosphate reductase from Dechloromonas aromatica (strain RCB).